The sequence spans 418 residues: Tyrosine--tRNA ligase (418 aa).

Tyrosine 34 contacts L-tyrosine. The short motif at 39–48 (PTADSLHLGH) is the 'HIGH' region element. Residues tyrosine 169 and glutamine 173 each contribute to the L-tyrosine site. The 'KMSKS' region motif lies at 229 to 233 (KFGKS). Lysine 232 is a binding site for ATP. Residues 352 to 418 (HNIVELLVTA…GKKKYFVLTY (67 aa)) form the S4 RNA-binding domain.

It belongs to the class-I aminoacyl-tRNA synthetase family. TyrS type 1 subfamily. In terms of assembly, homodimer.

It localises to the cytoplasm. It catalyses the reaction tRNA(Tyr) + L-tyrosine + ATP = L-tyrosyl-tRNA(Tyr) + AMP + diphosphate + H(+). Its function is as follows. Catalyzes the attachment of tyrosine to tRNA(Tyr) in a two-step reaction: tyrosine is first activated by ATP to form Tyr-AMP and then transferred to the acceptor end of tRNA(Tyr). In Streptococcus mutans serotype c (strain ATCC 700610 / UA159), this protein is Tyrosine--tRNA ligase.